A 589-amino-acid chain; its full sequence is PTS system mannitol-specific EIICB component (589 aa).

Over 1–25 (MERKSSLKVRVQKLGTSLSNMVMPN) the chain is Cytoplasmic. The PTS EIIC type-2 domain occupies 14 to 347 (LGTSLSNMVM…ILKSDNSDDD (334 aa)). Residues 26 to 47 (IGAFIAWGVAASLFIATGYLPN) traverse the membrane as a helical segment. Topologically, residues 48-51 (KALD) are extracellular. A helical transmembrane segment spans residues 52–73 (TNVVGPMLKYVLPLLIGYTGGY). Residues 74–136 (NIHKQRGGVI…TGFEMLVNNF (63 aa)) are Cytoplasmic-facing. The chain crosses the membrane as a helical span at residues 137–158 (SLGLIGFALMVLAFFVIGPVVA). Residues 159 to 167 (QLTEWVGIG) are Extracellular-facing. The helical transmembrane segment at 168-188 (VEAIVKVHLLPLANLIIEPAK) threads the bilayer. Topologically, residues 189–275 (ILFLNNALNH…VMMKPAMFLA (87 aa)) are cytoplasmic. A helical transmembrane segment spans residues 276–295 (VIAGGLTGTFTFQTLGAGLT). Residues 296 to 317 (APASPGSIIAIMGMSPKGWGPH) are Extracellular-facing. The chain crosses the membrane as a helical span at residues 318 to 339 (LVVLAGVFAAAVASFLVASIIL). Topologically, residues 340-589 (KSDNSDDDSL…YDKLVARMHK (250 aa)) are cytoplasmic. The region spanning 383 to 478 (HQIIFACDAG…SLTNGKASGS (96 aa)) is the PTS EIIB type-2 domain. Catalysis depends on Cys-389, which acts as the Phosphocysteine intermediate; for EIIB activity. Cys-389 bears the Phosphocysteine; by EIIA mark.

As to quaternary structure, homodimer.

Its subcellular location is the cell membrane. The catalysed reaction is D-mannitol(out) + N(pros)-phospho-L-histidyl-[protein] = D-mannitol 1-phosphate(in) + L-histidyl-[protein]. Functionally, the phosphoenolpyruvate-dependent sugar phosphotransferase system (sugar PTS), a major carbohydrate active transport system, catalyzes the phosphorylation of incoming sugar substrates concomitantly with their translocation across the cell membrane. The enzyme II CmtAB PTS system is involved in D-mannitol transport. This Streptococcus mutans serotype c (strain ATCC 700610 / UA159) protein is PTS system mannitol-specific EIICB component.